The primary structure comprises 810 residues: MSKGPGPGGSAASSAPPAATAQVLQAQPEKPQHYTYLKEFRTEQCPLFVQHKCTQHRPYTCFHWHFVNQRRRRSIRRRDGTFNYSPDVYCTKYDEATGLCPEGDECPFLHRTTGDTERRYHLRYYKTGICIHETDSKGNCTKNGLHCAFAHGPHDLRSPVYDIRELQAMEALQNGQTTVEGSIEGQSAGAASHAMIEKILSEEPRWQETAYVLGNYKTEPCKKPPRLCRQGYACPYYHNSKDRRRSPRKHKYRSSPCPNVKHGDEWGDPGKCENGDACQYCHTRTEQQFHPEIYKSTKCNDMQQSGSCPRGPFCAFAHVEQPPLSDDLQPSSAVSSPTQPGPVLYMPSAAGDSVPVSPSSPHAPDLSALLCRNSSLGSPSNLCGSPPGSIRKPPNLEGIVFPGESGLAPGSYKKAPGFEREDQVGAEYLKNFKCQAKLKPHSLEPRSQEQPLLQPKQDMLGILPAGSPLTSSISSSITSSLAATPPSPVGTSSVPGMNANALPFYPTSDTVESVIESALDDLDLNEFGVAALEKTFDNSTVPHPGSITIGGSLLQSSAPVNIPGSLGSSASFHSASPSPPVSLSSHFLQQPQGHLSQSENTFLGTSASHGSLGLNGMNSSIWEHFASGSFSPGTSPAFLSGPGAAELARLRQELDEANSTIKQWEESWKQAKQACDAWKKEAEEAGERASAAGAECELAREQRDALEVQVKKLQEELERLHAGPEPQALPAFSDLEALSLSTLYSLQKQLRAHLEQVDKAVFHMQSVKCLKCQEQKRAVLPCQHAALCELCAEGSECPICQPGRAHTLQS.

The segment at 1–24 (MSKGPGPGGSAASSAPPAATAQVL) is disordered. Residues 10 to 19 (SAASSAPPAA) show a composition bias toward low complexity. 5 C3H1-type zinc fingers span residues 84-113 (YSPDVYCTKYDEATGLCPEGDECPFLHRTT), 124-154 (YYKTGICIHETDSKGNCTKNGLHCAFAHGPH), 215-241 (NYKTEPCKKPPRLCRQGYACPYYHNSK), 251-285 (KYRSSPCPNVKHGDEWGDPGKCENGDACQYCHTRT), and 293-321 (IYKSTKCNDMQQSGSCPRGPFCAFAHVEQ). Residues 239–265 (NSKDRRRSPRKHKYRSSPCPNVKHGDE) form a disordered region. Residue serine 240 is modified to Phosphoserine. The span at 241–253 (KDRRRSPRKHKYR) shows a compositional bias: basic residues. The segment at 324–343 (LSDDLQPSSAVSSPTQPGPV) is disordered. A compositionally biased stretch (polar residues) spans 328 to 338 (LQPSSAVSSPT). Residues serine 374, serine 378, serine 385, and serine 631 each carry the phosphoserine modification. Positions 643–723 (GAAELARLRQ…QEELERLHAG (81 aa)) form a coiled coil. The RING-type; degenerate zinc-finger motif lies at 766 to 801 (SVKCLKCQEQKRAVLPCQHAALCELCAEGSECPICQ).

This sequence belongs to the unkempt family.

Its subcellular location is the cytoplasm. Sequence-specific RNA-binding protein which plays an important role in the establishment and maintenance of the early morphology of cortical neurons during embryonic development. Acts as a translation repressor and controls a translationally regulated cell morphology program to ensure proper structuring of the nervous system. Translational control depends on recognition of its binding element within target mRNAs which consists of a mandatory UAG trimer upstream of a U/A-rich motif. Associated with polysomes. The protein is RING finger protein unkempt homolog (UNK) of Homo sapiens (Human).